Consider the following 535-residue polypeptide: Nuclear/nucleolar GTPase 2 (535 aa).

Residues 1 to 42 (MAKKKERAVNVSGKPRHSLDVNRANDKKGAGGGAGGGGGGRS) form a disordered region. Residues 17–29 (HSLDVNRANDKKG) are compositionally biased toward basic and acidic residues. Gly residues predominate over residues 30–41 (AGGGAGGGGGGR). Positions 213–374 (WGELYKVIDS…LIDCPGVVYQ (162 aa)) constitute a CP-type G domain. The segment at 261–264 (NKCD) is G4. A G5 region spans residues 290–292 (SIN). The segment at 323–330 (GYPNVGKS) is G1. The interval 349–353 (GETKV) is G2. The G3 stretch occupies residues 367–370 (DCPG). Residues 464-495 (FFVPPPQQGEDSPSETAEPVDKSDEEGVSSDR) form a disordered region.

This sequence belongs to the TRAFAC class YlqF/YawG GTPase family. RsgA subfamily.

Its subcellular location is the nucleus. It localises to the nucleolus. In terms of biological role, GTPase involved in pre-60S ribosomal subunit maturation. In Oryza sativa subsp. indica (Rice), this protein is Nuclear/nucleolar GTPase 2.